Here is a 510-residue protein sequence, read N- to C-terminus: Light-independent protochlorophyllide reductase subunit B (510 aa).

A [4Fe-4S] cluster-binding site is contributed by Asp-36. The active-site Proton donor is Asp-297. Residue Gly-432–Met-433 participates in substrate binding.

Belongs to the ChlB/BchB/BchZ family. In terms of assembly, protochlorophyllide reductase is composed of three subunits; ChlL, ChlN and ChlB. Forms a heterotetramer of two ChlB and two ChlN subunits. [4Fe-4S] cluster is required as a cofactor.

The protein localises to the plastid. Its subcellular location is the chloroplast. The catalysed reaction is chlorophyllide a + oxidized 2[4Fe-4S]-[ferredoxin] + 2 ADP + 2 phosphate = protochlorophyllide a + reduced 2[4Fe-4S]-[ferredoxin] + 2 ATP + 2 H2O. It participates in porphyrin-containing compound metabolism; chlorophyll biosynthesis (light-independent). Component of the dark-operative protochlorophyllide reductase (DPOR) that uses Mg-ATP and reduced ferredoxin to reduce ring D of protochlorophyllide (Pchlide) to form chlorophyllide a (Chlide). This reaction is light-independent. The NB-protein (ChlN-ChlB) is the catalytic component of the complex. The sequence is that of Light-independent protochlorophyllide reductase subunit B from Pinus koraiensis (Korean pine).